Reading from the N-terminus, the 366-residue chain is tRNA/tmRNA (uracil-C(5))-methyltransferase (366 aa).

The S-adenosyl-L-methionine site is built by glutamine 190, tyrosine 218, asparagine 223, glutamate 239, and aspartate 299. Residue cysteine 324 is the Nucleophile of the active site. Catalysis depends on glutamate 358, which acts as the Proton acceptor.

It belongs to the class I-like SAM-binding methyltransferase superfamily. RNA M5U methyltransferase family. TrmA subfamily.

The enzyme catalyses uridine(54) in tRNA + S-adenosyl-L-methionine = 5-methyluridine(54) in tRNA + S-adenosyl-L-homocysteine + H(+). The catalysed reaction is uridine(341) in tmRNA + S-adenosyl-L-methionine = 5-methyluridine(341) in tmRNA + S-adenosyl-L-homocysteine + H(+). Functionally, dual-specificity methyltransferase that catalyzes the formation of 5-methyluridine at position 54 (m5U54) in all tRNAs, and that of position 341 (m5U341) in tmRNA (transfer-mRNA). The protein is tRNA/tmRNA (uracil-C(5))-methyltransferase of Salmonella paratyphi B (strain ATCC BAA-1250 / SPB7).